Reading from the N-terminus, the 631-residue chain is RING finger protein 112 (631 aa).

The RING-type zinc finger occupies 57–98; the sequence is CSICLERLRDPISLDCGHDFCIRCFSTHRLPGCEPPCCPECR. Positions 131–631 are interaction with ZBTB16; that stretch reads PVRAEPLLLV…GDREPLLQEE (501 aa). A GB1/RHD3-type G domain is found at 166–397; sequence DTPVCLLAVL…YVSDVLSAAP (232 aa). 318 to 319 contributes to the GTP binding site; the sequence is RD. 2 helical membrane passes run 547-567 and 580-600; these read LAAV…GVVG and GMVA…GGGV.

Belongs to the TRAFAC class dynamin-like GTPase superfamily. GB1/RHD3 GTPase family. GB1 subfamily. In terms of assembly, self-associates. Interacts with SP1 in an oxidative stress-regulated manner. Interacts with SIGMAR1 in an oxidative stress-regulated manner. Interacts with ZBTB16 (via C2H2-type zinc finger domains 1 and 2). In terms of processing, auto-ubiquitinated. Predominantly expressed in brain. Decreased expression in glioma brain tumors as compared to normal brains (at protein level).

The protein resides in the membrane. It is found in the cytoplasm. Its subcellular location is the nucleus. The protein localises to the nuclear body. It localises to the nucleoplasm. The protein resides in the endosome. It is found in the cytoplasmic vesicle. Its subcellular location is the secretory vesicle. The protein localises to the synaptic vesicle. It localises to the postsynaptic density. The protein resides in the perikaryon. It is found in the cell projection. Its subcellular location is the neuron projection. It carries out the reaction S-ubiquitinyl-[E2 ubiquitin-conjugating enzyme]-L-cysteine + [acceptor protein]-L-lysine = [E2 ubiquitin-conjugating enzyme]-L-cysteine + N(6)-ubiquitinyl-[acceptor protein]-L-lysine.. It functions in the pathway protein modification; protein ubiquitination. In terms of biological role, E3 ubiquitin-protein ligase that plays an important role in neuronal differentiation, including neurogenesis and gliogenesis, during brain development. During embryonic development initiates neuronal differentiation by inducing cell cycle arrest at the G0/G1 phase through up-regulation of cell-cycle regulatory proteins. Plays a role not only in the fetal period during the development of the nervous system, but also in the adult brain, where it is involved in the maintenance of neural functions and protection of the nervous tissue cells from oxidative stress-induced damage. Exhibits GTPase and E3 ubiquitin-protein ligase activities. Regulates dendritic spine density and synaptic neurotransmission; its ability to hydrolyze GTP is involved in the maintenance of dendritic spine density. The polypeptide is RING finger protein 112 (RNF112) (Homo sapiens (Human)).